Reading from the N-terminus, the 477-residue chain is Glutamate--tRNA ligase (477 aa).

A 'HIGH' region motif is present at residues 18-28 (PSPTGFIHLGN). A compositionally biased stretch (basic and acidic residues) spans 128–138 (PRYDGSWRPEP). Positions 128–151 (PRYDGSWRPEPGKTLPPVPAGMSP) are disordered. The 'KMSKS' region motif lies at 250 to 254 (KLSKR). K253 serves as a coordination point for ATP.

This sequence belongs to the class-I aminoacyl-tRNA synthetase family. Glutamate--tRNA ligase type 1 subfamily. Monomer.

It localises to the cytoplasm. It carries out the reaction tRNA(Glu) + L-glutamate + ATP = L-glutamyl-tRNA(Glu) + AMP + diphosphate. In terms of biological role, catalyzes the attachment of glutamate to tRNA(Glu) in a two-step reaction: glutamate is first activated by ATP to form Glu-AMP and then transferred to the acceptor end of tRNA(Glu). The sequence is that of Glutamate--tRNA ligase from Verminephrobacter eiseniae (strain EF01-2).